The primary structure comprises 1248 residues: Structural polyprotein (1248 aa).

The span at 1–10 shows a compositional bias: polar residues; it reads MEFIPTQTFY. A disordered region spans residues 1–104; the sequence is MEFIPTQTFY…KKKKPGRRER (104 aa). The interval 36–68 is host transcription inhibition; sequence RKAGQLAQLISAVNKLTMRAVPQQKPRKNRKNK. A compositionally biased stretch (basic residues) spans 60–72; the sequence is KPRKNRKNKKQKQ. The Nuclear localization signal signature appears at 61-99; sequence PRKNRKNKKQKQKQQAPRNNMNQKKQPPKKKPAQKKKKP. Low complexity predominate over residues 73-85; sequence KQQAPRNNMNQKK. Residues 84–114 form a binding to the viral RNA region; sequence KKQPPKKKPAQKKKKPGRRERMCMKIENDCI. The segment covering 86–101 has biased composition (basic residues); it reads QPPKKKPAQKKKKPGR. The interval 99 to 113 is ribosome-binding; sequence PGRRERMCMKIENDC. An intrachain disulfide couples cysteine 113 to cysteine 128. The region spanning 113–261 is the Peptidase S3 domain; it reads CIFEVKHEGK…KITPEGAEEW (149 aa). Histidine 139 acts as the Charge relay system in catalysis. Positions 144–154 match the Nuclear export signal motif; it reads IDNADLAKLAF. The tract at residues 155–160 is interaction with spike glycoprotein E2; it reads KRSSKY. Aspartate 161 acts as the Charge relay system in catalysis. A dimerization of the capsid protein region spans residues 183-193; it reads PEGYYNWHHGA. The Charge relay system role is filled by serine 213. Residues 219–223 form a dimerization of the capsid protein region; the sequence is DNKGR. The interval 262–274 is functions as an uncleaved signal peptide for the precursor of protein E3/E2; the sequence is SLAIPVMCLLANT. The Extracellular portion of the chain corresponds to 262–692; it reads SLAIPVMCLL…YYYELYPTMT (431 aa). 9 disulfide bridges follow: cysteine 269-cysteine 278, cysteine 283-cysteine 287, cysteine 286-cysteine 318, cysteine 344-cysteine 450, cysteine 347-cysteine 353, cysteine 416-cysteine 430, cysteine 478-cysteine 591, cysteine 526-cysteine 550, and cysteine 528-cysteine 545. Asparagine 273 carries an N-linked (GlcNAc...) asparagine; by host glycan. Interaction with host Mxra8 receptor regions lie at residues 351-354 and 387-389; these read HSCH and HDW. Interaction with host Mxra8 receptor regions lie at residues 509–512 and 541–547; these read QSGN and VINNCKV. Residues asparagine 588 and asparagine 670 are each glycosylated (N-linked (GlcNAc...) asparagine; by host). A helical membrane pass occupies residues 693–713; that stretch reads VVVVSVASFVLLSMVGVAVGM. Residues 714–748 are Cytoplasmic-facing; that stretch reads CMCARRRCITPYELTPGATVPFLLSLICCIRTAKA. The segment at 716-720 is interaction with the capsid protein; sequence CARRR. S-palmitoyl cysteine; by host attachment occurs at residues cysteine 721, cysteine 741, and cysteine 742. A transient transmembrane before p62-6K protein processing region spans residues 721 to 741; it reads CITPYELTPGATVPFLLSLIC. Cysteines 721 and 742 form a disulfide. Topologically, residues 749–763 are extracellular; that stretch reads ATYQEAAVYLWNEQQ. The helical transmembrane segment at 764 to 784 threads the bilayer; sequence PLFWLQAIIPLAALIVLCNCL. The Cytoplasmic segment spans residues 785-795; that stretch reads RLLPCCCKTLT. Residues 796 to 816 form a helical membrane-spanning segment; it reads FLAVMSVGAHTVSAYEHVTVI. At 817–1224 the chain is on the extracellular side; it reads PNTVGVPYKT…AMSWVQKITG (408 aa). Disulfide bonds link cysteine 858–cysteine 923, cysteine 871–cysteine 903, and cysteine 877–cysteine 887. The segment at 893-910 is E1 fusion peptide loop; the sequence is VYPFMWGGAYCFCDTENT. Asparagine 950 and asparagine 1079 each carry an N-linked (GlcNAc...) asparagine; by host glycan. 4 disulfide bridges follow: cysteine 1068/cysteine 1080, cysteine 1110/cysteine 1185, cysteine 1115/cysteine 1189, and cysteine 1137/cysteine 1179. A helical transmembrane segment spans residues 1225 to 1245; it reads GVGLVVAVAALILIVVLCVSF. The S-palmitoyl cysteine; by host moiety is linked to residue cysteine 1242. At 1246–1248 the chain is on the cytoplasmic side; the sequence is SRH.

Homodimer. Homomultimer. Interacts with host karyopherin KPNA4; this interaction allows the nuclear import of the viral capsid protein. Interacts with spike glycoprotein E2. Interacts with host IRAK1; the interaction leads to inhibition of IRAK1-dependent signaling. As to quaternary structure, the precursor of protein E3/E2 and E1 form a heterodimer shortly after synthesis. In terms of assembly, interacts with spike glycoprotein E2. The precursor of protein E3/E2 and E1 form a heterodimer shortly after synthesis. Processing of the precursor of protein E3/E2 into E2 and E3 results in a heterodimer of the spike glycoproteins E2 and E1. Spike at virion surface are constituted of three E2-E1 heterodimers. After target cell attachment and endocytosis, E1 change conformation to form homotrimers. Interacts with 6K protein. Interacts with host MXRA8; this interaction mediates virus entry. The interaction involves 2 adjacent E2-E1 heterodimers. Interacts with spike glycoprotein E1. Processing of the precursor of protein E3/E2 into E2 and E3 results in a heterodimer of the spike glycoproteins E2 and E1. Spike at virion surface are constituted of a trimer of E2-E1 heterodimers. Interacts with 6K protein. Interacts with host MXRA8; this interaction mediates virus entry. The interaction involves 2 adjacent E2-E1 heterodimers. As to quaternary structure, oligomer. Interacts with spike glycoprotein E1. Interacts with spike glycoprotein E2. Structural polyprotein: Specific enzymatic cleavages in vivo yield mature proteins. Capsid protein is auto-cleaved during polyprotein translation, unmasking a signal peptide at the N-terminus of the precursor of E3/E2. The remaining polyprotein is then targeted to the host endoplasmic reticulum, where host signal peptidase cleaves it into pE2, 6K and E1 proteins. pE2 is further processed to mature E3 and E2 by host furin in trans-Golgi vesicle. Post-translationally, palmitoylated via thioester bonds. These palmitoylations may induce disruption of the C-terminus transmembrane. This would result in the reorientation of E2 C-terminus from lumenal to cytoplasmic side. In terms of processing, N-glycosylated. Palmitoylated via thioester bonds.

It is found in the virion. The protein resides in the host cytoplasm. Its subcellular location is the host cell membrane. It localises to the host nucleus. The protein localises to the virion membrane. It is found in the host Golgi apparatus. The protein resides in the host trans-Golgi network. Its subcellular location is the host endoplasmic reticulum. It carries out the reaction Autocatalytic release of the core protein from the N-terminus of the togavirus structural polyprotein by hydrolysis of a -Trp-|-Ser- bond.. Its function is as follows. Forms an icosahedral capsid with a T=4 symmetry composed of 240 copies of the capsid protein surrounded by a lipid membrane through which penetrate 80 spikes composed of trimers of E1-E2 heterodimers. The capsid protein binds to the viral RNA genome at a site adjacent to a ribosome binding site for viral genome translation following genome release. Possesses a protease activity that results in its autocatalytic cleavage from the nascent structural protein. Following its self-cleavage, the capsid protein transiently associates with ribosomes, and within several minutes the protein binds to viral RNA and rapidly assembles into icosahedric core particles. The resulting nucleocapsid eventually associates with the cytoplasmic domain of the spike glycoprotein E2 at the cell membrane, leading to budding and formation of mature virions. In case of infection, new virions attach to target cells and after clathrin-mediated endocytosis their membrane fuses with the host endosomal membrane. This leads to the release of the nucleocapsid into the cytoplasm, followed by an uncoating event necessary for the genomic RNA to become accessible. The uncoating might be triggered by the interaction of capsid proteins with ribosomes. Binding of ribosomes would release the genomic RNA since the same region is genomic RNA-binding and ribosome-binding. Specifically inhibits interleukin-1 receptor-associated kinase 1/IRAK1-dependent signaling during viral entry, representing a means by which the alphaviruses may evade innate immune detection and activation prior to viral gene expression. Degrades host cyclic GMP-AMP synthase (CGAS) thereby inhibiting the cGAS-STING pathway. Provides the signal sequence for the translocation of the precursor of protein E3/E2 to the host endoplasmic reticulum. Furin-cleaved E3 remains associated with spike glycoprotein E1 and mediates pH protection of the latter during the transport via the secretory pathway. After virion release from the host cell, the assembly protein E3 is gradually released in the extracellular space. Functionally, plays a role in viral attachment to target host cell, by binding to the cell receptor MXRA8. Synthesized as a p62 precursor which is processed by furin at the cell membrane just before virion budding, giving rise to E2-E1 heterodimer. The p62-E1 heterodimer is stable, whereas E2-E1 is unstable and dissociate at low pH. p62 is processed at the last step, presumably to avoid E1 fusion activation before its final export to cell surface. E2 C-terminus contains a transitory transmembrane that would be disrupted by palmitoylation, resulting in reorientation of the C-terminal tail from lumenal to cytoplasmic side. This step is critical since E2 C-terminus is involved in budding by interacting with capsid proteins. This release of E2 C-terminus in cytoplasm occurs lately in protein export, and precludes premature assembly of particles at the endoplasmic reticulum membrane. In terms of biological role, acts as a viroporin that participates in virus glycoprotein processing and transport to the plasma membrane, cell permeabilization and budding of viral particles. Disrupts the calcium homeostasis of the cell, probably at the endoplasmic reticulum level. This leads to cytoplasmic calcium elevation. Because of its lipophilic properties, the 6K protein is postulated to influence the selection of lipids that interact with the transmembrane domains of the glycoproteins, which, in turn, affects the deformability of the bilayer required for the extreme curvature that occurs as budding proceeds. Present in low amount in virions, about 3% compared to viral glycoproteins. Its function is as follows. Class II viral fusion protein. Fusion activity is inactive as long as E1 is bound to E2 in mature virion. After virus attachment to target cell via host MXRA8 and endocytosis, acidification of the endosome induce dissociation of E1/E2 heterodimer and concomitant trimerization of the E1 subunits. This E1 trimer is fusion active, and promotes release of viral nucleocapsid in cytoplasm after endosome and viral membrane fusion. Efficient fusion requires the presence of cholesterol and sphingolipid in the target membrane. In Chikungunya virus (strain Nagpur) (CHIKV), this protein is Structural polyprotein.